Reading from the N-terminus, the 148-residue chain is D-aminoacyl-tRNA deacylase (148 aa).

Positions 137–138 (GP) match the Gly-cisPro motif, important for rejection of L-amino acids motif.

The protein belongs to the DTD family. In terms of assembly, homodimer.

Its subcellular location is the cytoplasm. The catalysed reaction is glycyl-tRNA(Ala) + H2O = tRNA(Ala) + glycine + H(+). It carries out the reaction a D-aminoacyl-tRNA + H2O = a tRNA + a D-alpha-amino acid + H(+). In terms of biological role, an aminoacyl-tRNA editing enzyme that deacylates mischarged D-aminoacyl-tRNAs. Also deacylates mischarged glycyl-tRNA(Ala), protecting cells against glycine mischarging by AlaRS. Acts via tRNA-based rather than protein-based catalysis; rejects L-amino acids rather than detecting D-amino acids in the active site. By recycling D-aminoacyl-tRNA to D-amino acids and free tRNA molecules, this enzyme counteracts the toxicity associated with the formation of D-aminoacyl-tRNA entities in vivo and helps enforce protein L-homochirality. The sequence is that of D-aminoacyl-tRNA deacylase from Latilactobacillus sakei subsp. sakei (strain 23K) (Lactobacillus sakei subsp. sakei).